The sequence spans 553 residues: MMPRMTGKADLNTLVHKLHPLEIKVLKNCAMDEILSTSLLISRLGFKEGHANQAFSWLRAKRIIEEHQREQMRSFELTPCGYAAASDGTAEERMLTFLSSPPSLTAIADAAEHLHPRPPLCNGLSLPELAHALTLAPKDVGSAFGILAQEGILRMDGEKRIHIVSPHVSDRMSLTRTLLQRAAARVASPSEASDTPPGTLFESELSDDERRVMERIAKKRGASDSLFKVSVRERVTFTFTPTARAVQEALHTAGLTGNEIGALTVECLKSGAWKTQHLRRYNVHIPPARIIPGRSNAYADFLEHIKDRLVALGFQEFDGPLVETDFWNADALFMPQFHPARDIHDVYYLKHPTHAPTIPEPFLSRVAATHERGADSGSLGWRYSFDRDFTRRLLLRSQGTALSARHLPTAHIPGKYFGIARCFRHDQVDATHLADFYQTEGIVLGTDVNVCTLLGMLKILATEIAGAQEVRYVGGYFPFTEPSIELHALHPALGWFELGGAGLLRPEVTDPLGVHVPVMAWGLGVDRMALLALGISDVRELFSPDIESVRLRV.

2 residues coordinate L-phenylalanine: threonine 400 and phenylalanine 479. Glutamate 481 is a Mg(2+) binding site.

Belongs to the class-II aminoacyl-tRNA synthetase family. Phe-tRNA synthetase alpha subunit type 2 subfamily. As to quaternary structure, tetramer of two alpha and two beta subunits. Mg(2+) is required as a cofactor.

It is found in the cytoplasm. It catalyses the reaction tRNA(Phe) + L-phenylalanine + ATP = L-phenylalanyl-tRNA(Phe) + AMP + diphosphate + H(+). The polypeptide is Phenylalanine--tRNA ligase alpha subunit (Treponema pallidum (strain Nichols)).